Reading from the N-terminus, the 564-residue chain is MERDRITALKRSFEVEEIEPPNSTPPRRVQTPLLRATVASSSQKFQDLGVKNSEPAARLVDTLSQRSPKPSLRRVDLAGAKAPEPMSRRTELSIDISSKQVESTASTPGPSRFGLKRAEVLGHKTPEPVPRRTEITIVKPQESGLRRVETPASKAPEGSAMPVTDAAPKRVEIQVPKPAEAPNCPLPPQTLENSEAPMSQLQSRLEPRPPVTEVPYRNQEDSEVAPSCVVDMADNPRDAMLKQAPVSRNEKAPVDFGYVGIDSILEQMRRKAMKQGFEFNIMVVGQSGLGKSTLINTLFKSKISRKSVQPISEERIPKTIEIKSITHDIEEKGVRMKLTVIDTPGFGDHINNENCWQPIMKFINDQYEKYLQEEVNINRKKRIPDTRVHCCLYFIPATGHSLRPLDIEFMKRLSKVVNIVPVIAKADTLTLEERVYFKQRITSDLLSNGIDVYPQKEFDEAEDRLVNEKFREMIPFAVVGSDHEYQVNGKRILGRKTKWGTIEVENTTHCEFAYLRDLLIRTHMQNIKDITSNIHFEAYRVKRLNEGNSAMANGIEKEPETQEM.

Methionine 1 carries the N-acetylmethionine modification. Serine 12 is subject to Phosphoserine. A phosphothreonine mark is found at threonine 24 and threonine 31. Disordered regions lie at residues 38 to 165 (VASS…PVTD) and 178 to 224 (PAEA…DSEV). Lysine 44 carries the post-translational modification N6-acetyllysine. Phosphoserine is present on residues serine 64, serine 67, and serine 71. Positions 95–109 (DISSKQVESTASTPG) are enriched in polar residues. Positions 116-134 (KRAEVLGHKTPEPVPRRTE) are enriched in basic and acidic residues. Threonine 125 is modified (phosphothreonine). Positions 190-203 (TLENSEAPMSQLQS) are enriched in polar residues. Tyrosine 258 is subject to Phosphotyrosine. The Septin-type G domain maps to 275–546 (QGFEFNIMVV…EAYRVKRLNE (272 aa)). Residues 285-292 (GQSGLGKS) are G1 motif. 285 to 292 (GQSGLGKS) lines the GTP pocket. Residues serine 307 and serine 312 each carry the phosphoserine modification. GTP-binding positions include threonine 319, glycine 345, 425–433 (KADTLTLEE), glycine 480, and arginine 495. Residues 342-345 (DTPG) form a G3 motif region. Positions 424-427 (AKAD) are G4 motif.

This sequence belongs to the TRAFAC class TrmE-Era-EngA-EngB-Septin-like GTPase superfamily. Septin GTPase family. In terms of assembly, septins polymerize into heterooligomeric protein complexes that form filaments, and associate with cellular membranes, actin filaments, and microtubules. GTPase activity is required for filament formation. Interacts with SEPTIN2, SEPTIN6, SEPTIN7, SEPTIN11 and SEPTIN14. Interacts with RTKN and ARHGEF18. As to expression, expressed in the brain, mainly in the perikarya and processes of astrocytes in the cerebellum, dentate gyrus and corpus callosum (at protein level). In the sciatic nerve, highly expressed in Schwann cells (at protein level). Isoforms are differentially expressed in testes, kidney, liver, heart, spleen and brain. Undetectable in skeletal muscle.

It is found in the cytoplasm. The protein localises to the cytoskeleton. Its function is as follows. Filament-forming cytoskeletal GTPase. May play a role in cytokinesis (Potential). The protein is Septin-9 of Rattus norvegicus (Rat).